Reading from the N-terminus, the 175-residue chain is Endoribonuclease YbeY (175 aa).

Positions 129, 133, and 139 each coordinate Zn(2+).

This sequence belongs to the endoribonuclease YbeY family. Zn(2+) is required as a cofactor.

It is found in the cytoplasm. Its function is as follows. Single strand-specific metallo-endoribonuclease involved in late-stage 70S ribosome quality control and in maturation of the 3' terminus of the 16S rRNA. The protein is Endoribonuclease YbeY of Lactobacillus johnsonii (strain CNCM I-12250 / La1 / NCC 533).